Reading from the N-terminus, the 201-residue chain is Prostamide/prostaglandin F synthase (201 aa).

Residue Y108 is modified to Phosphotyrosine.

Belongs to the peroxiredoxin-like PRXL2 family. Prostamide/prostaglandin F synthase subfamily.

Its subcellular location is the cytoplasm. It localises to the cytosol. It carries out the reaction prostaglandin H2 + [thioredoxin]-dithiol = prostaglandin F2alpha + [thioredoxin]-disulfide. It catalyses the reaction prostamide F2alpha + [thioredoxin]-disulfide = prostamide H2 + [thioredoxin]-dithiol. Catalyzes the reduction of prostaglandin-ethanolamide H(2) (prostamide H(2)) to prostamide F(2alpha) with NADPH as proton donor. Also able to reduce prostaglandin H(2) to prostaglandin F(2alpha). The polypeptide is Prostamide/prostaglandin F synthase (PRXL2B) (Bos taurus (Bovine)).